The sequence spans 1781 residues: MKVAYFSNEFPHDDTRDLFRRLHVHSKDKRYPTLARFISEATSALRDEVAALPTALRALVPTFDSIFSLVDNTAVRQGRLGGAIDGVLLCALHIATFIGFYESDTEEEFDLSAVDTCLAGLGTGLLSTVALSLSPSLADLPTTGALVVGIAFRLGVVVDDVSQNLQPRPAIAESGPGDSWAYVVPDVSPEEIQKELDTIQIAEKTPEPSKIFISALSRTSVTVSGPPARLKHLFLVSAYFRDRKHVALPVYAGLCHAAHIYDEHHVEKIIQSSSLDSISAKYRPRVRVLSTSTGRPFSGLTAKELFRNVIEEILTKSIEWDEVIRGIIQRAKDSAAVECDVLIFRTSLPVHELLATFGTELQQFRASTKDLVSWIAKPDSPPAKPSGKAQSKIAIVGMACRLPGGSTDPDKFWDLLEKGLDVHRKIPADRFDVDSHYDPEGKRMNASWTPYGCFIDEPGLFDAPFFNMSPREALQTDPMQRLALVTAYEALEKAGVVPNRTAATDAHRIGTYYGQASDDYREVNTAQEISTYFITGGCRAFGPGRINYFFKFSGPSYSVDTACSSGLAAIQACTSLWAGEVETAIAGGVNVLTNCDAFAGLSNGHFLTKTPNACKTWDCDADGYCRADGVVSLVLKRLEDAEADNDNILGVILGAGTNHSADAVSITHPHAGAQAFLTSQTVRKAGVDPFDISYIEMHGTGTQAGDAQEILSVTEVFAPLTRRRTSKQPLYIGSVKANVGHGEAVSGPTALVKLLLMFQKEAIPAHVGIKNSINPGFPKDLAKRNLHIPYEQTPWPRVPGKKRIAVVNNFSAAGGNTSVVVEEASVREPVKGTDPRSSHLITVSAKSKVSLKGNLERLIAYVEANPDVSLADLAYTTTARRRHHNHRVAVAASDAAQLKKQLGSYLQSVESHKPIPSTGQPPVVFAFTGQGASHPSMNLELFHHSPYFRAQLLHLDSLAQQQGFGSFIPVVDGSHERSHAHSPTATQLALVCVEIALAKYWESLGVKPDVVIGHSLGEYAALHVAGVLSASDAISMVGRRAALLEQKCQTGSHQMLAVRASLADIQAIVHDKPYEVSCINGPRDTVLSGTREQVAVLTEVLQAAGHRCISLDVAFAFHSAQTDPILEEFEEVTKSSILFQPPNLPIISPLLGKVIFDEKTVNATYVRRATREAVNFLGAIEIAQQMSTIDETMAWIEIGPHPVCINFVKSILPRVNVAVPSIRRGEDNWQTVSHSLGLLHCAGLELNWNEFHLAFEENLRLVDLPTYAWNDKTHWIQYIGDWALTKGNTFYDAEKAAANPGALVHTRSNIKTSTVQQIIEETFSDSAATVVMQSNLMEPDFLAAAHGHRMNDCGVVTSSIHADIAYTLGAYIMKKLRPKSQNVGMDIANLEVLKGLIAQKNTDKPQFIQVSAQVHDIDLGVAHLQWHNVSSNGEVDEPFASADIVYGLPTDWLKSWVPATHLVQGRIEALERLAEAGIANRLSHNMAYLLFANNLVDYAQKYRGMQSVVMHELEAFADVTLTTEKGGVWTVPPYFIDSVAHLAGFVMNVSDANDTKQNFCVTPGWGSMRFAKPLVAGQKYRSYVKMIPTEEDPTVYLGDVYVLQDGVIIGEVGAIKFRRYPRVLLNRFFSAPDSDTSKHTSATDVSPPKKVVQSASTTTTVTKALPSKPVAIPAPQVAAPVVQPTEQVTVVKAVTELTSTVEVDSDSTASKAMALVAAEGGLELSDLPDDANFANLGVDSLMSLVIAEKFREQLGVTVNGSLFLEYPTVGDLKAWLMEYYS.

An N-terminal acylcarrier protein transacylase domain (SAT) region spans residues 15–253; that stretch reads TRDLFRRLHV…KHVALPVYAG (239 aa). The Ketosynthase family 3 (KS3) domain occupies 390-823; that stretch reads QSKIAIVGMA…GGNTSVVVEE (434 aa). Catalysis depends on for beta-ketoacyl synthase activity residues Cys563, His698, and His741. The interval 925–1244 is malonyl-CoA:ACP transacylase (MAT) domain; the sequence is FAFTGQGASH…SLGLLHCAGL (320 aa). Residues 1312 to 1631 are product template (PT) domain; sequence TSTVQQIIEE…RVLLNRFFSA (320 aa). The N-terminal hotdog fold stretch occupies residues 1316-1451; it reads QQIIEETFSD…ADIVYGLPTD (136 aa). The PKS/mFAS DH domain maps to 1316-1626; sequence QQIIEETFSD…FRRYPRVLLN (311 aa). Residue His1348 is the Proton acceptor; for dehydratase activity of the active site. The segment at 1478-1626 is C-terminal hotdog fold; sequence IANRLSHNMA…FRRYPRVLLN (149 aa). Asp1537 serves as the catalytic Proton donor; for dehydratase activity. The interval 1633–1653 is disordered; it reads DSDTSKHTSATDVSPPKKVVQ. In terms of domain architecture, Carrier spans 1703–1780; that stretch reads VDSDSTASKA…DLKAWLMEYY (78 aa). Ser1740 is subject to O-(pantetheine 4'-phosphoryl)serine.

It carries out the reaction holo-[ACP] + 8 malonyl-CoA + 8 H(+) = atrochrysone carboxyl-[ACP] + 8 CO2 + 8 CoA + 2 H2O. Its pathway is secondary metabolite biosynthesis. Functionally, atrochrysone carboxylic acid synthase; part of the gene cluster that mediates the biosynthesis of the dimeric xanthones cryptosporioptides. The pathway begins with the synthesis of atrochrysone thioester by the polyketide synthase dmx-nrPKS. The atrochrysone carboxyl ACP thioesterase dmxR1 then breaks the thioester bond and releases the atrochrysone carboxylic acid from dmx-nrPKS. Atrochrysone carboxylic acid is decarboxylated by the decarboxylase dmxR15, and oxidized by the anthrone oxygenase dmxR16 to yield emodin. Emodin is then reduced to emodin hydroquinone by the oxidoreductase dmxR7. A-ring reduction by the short chain dehydrogenase dmxR18, dehydration by the scytalone dehydratase-like protein dmxR17 and probable spontaneous re-oxidation, results in overall deoxygenation to chrysophanol. Baeyer-Villiger oxidation by the Baeyer-Villiger monooxygenase (BVMO) dmxR6 then yields monodictylactone in equilibrium with monodictyphenone. In the case of the cryptosporioptides biosynthesis, monodictylactone is reduced at C-12 to an alcohol (by the short chain dehydrogenases dmxR12 or dmxR8) and hydroxylated at C-5 by dmxR9, yielding the electron-rich aromatic which could eliminate H(2)O to form the ortho-quinonemethide, followed by tautomerisation to paraquinone and complete the formal reduction to produce the 10-methylgroup. Conjugate addition of C-4a-OH to the resulting paraquinone by the monooxygenase dmxR10 then gives cyclohexadienone, which is then reduced at C-5 by the short chain dehydrogenase dmxR3 to give the dihydroxanthone. The 6,7-epoxide in the cryptosporioptides could be introduced by the cytochrome P450 monooxygenase dmxL3. The highly reducing PKS dmxL2 manufactures butyrate, which is further carboxylated by dmxL1 to form ethylmalonate. It is not yet clear whether the carboxylation occurs while the butyrate is attached to the ACP of dmxL2, but this unusual fungal metabolite could then be esterified to O-5 by the O-acetyltransferase dmxR13. Finally, dimerization performed by dmxR5 gives the observed dimers cryptosporioptides A, B and C as the final products of the pathway. The protein is Atrochrysone carboxylic acid synthase of Cryptosporiopsis sp. (strain 8999).